The following is an 898-amino-acid chain: Serine/threonine-protein kinase TAO3 (898 aa).

One can recognise a Protein kinase domain in the interval phenylalanine 24–isoleucine 277. Residues isoleucine 30–valine 38 and lysine 53 contribute to the ATP site. The active-site Proton acceptor is aspartate 147. 2 disordered regions span residues threonine 316–serine 375 and aspartate 405–serine 424. Serine 324 is subject to Phosphoserine; by ATM. Phosphoserine occurs at positions 343, 346, and 349. Residues serine 349–serine 366 are compositionally biased toward low complexity. Threonine 357 bears the Phosphothreonine mark. Serine 359 bears the Phosphoserine mark. Over residues aspartate 405–proline 416 the composition is skewed to basic and acidic residues. A Phosphoserine modification is found at serine 442. 3 coiled-coil regions span residues glutamate 452–asparagine 502, phenylalanine 548–leucine 649, and leucine 754–glutamate 871. The segment at glutamate 565–glutamate 596 is disordered. At lysine 830 the chain carries N6-acetyllysine.

The protein belongs to the protein kinase superfamily. STE Ser/Thr protein kinase family. STE20 subfamily. Self-associates. Interacts with ERN1 and TRAF2. Interaction with TRAF2 is facilitated under ER stress conditions, such as treatment with tunicamycin, and may promote TRAF2 phosphorylation. Interacts (via N-terminus) with STK25; the interaction promotes STK25 abundance at the level of protein expression and/or stability. Post-translationally, autophosphorylated. Phosphorylation at Ser-324 by ATM following DNA damage is required for activation of the p38/MAPK14 stress-activated MAPK cascade. Phosphorylated at Ser-324 and on Tyr residues during T cell activation. Phosphorylated by LRRK2.

It is found in the cytoplasm. The protein localises to the cell membrane. It localises to the membrane raft. The protein resides in the lipid droplet. It carries out the reaction L-seryl-[protein] + ATP = O-phospho-L-seryl-[protein] + ADP + H(+). The catalysed reaction is L-threonyl-[protein] + ATP = O-phospho-L-threonyl-[protein] + ADP + H(+). In terms of biological role, serine/threonine-protein kinase that acts as a regulator of the p38/MAPK14 stress-activated MAPK cascade and of the MAPK8/JNK cascade. In response to DNA damage, involved in the G2/M transition DNA damage checkpoint by activating the p38/MAPK14 stress-activated MAPK cascade, probably by mediating phosphorylation of upstream MAP2K3 and MAP2K6 kinases. Inhibits basal activity of the MAPK8/JNK cascade and diminishes its activation in response to epidermal growth factor (EGF). Positively regulates canonical T cell receptor (TCR) signaling by preventing early PTPN6/SHP1-mediated inactivation of LCK, ensuring sustained TCR signaling that is required for optimal activation and differentiation of T cells. Phosphorylates PTPN6/SHP1 on 'Thr-394', leading to its polyubiquitination and subsequent proteasomal degradation. Required for cell surface expression of metalloprotease ADAM10 on type 1 transitional B cells which is necessary for their NOTCH-mediated development into marginal zone B cells. Also required for the NOTCH-mediated terminal differentiation of splenic conventional type 2 dendritic cells. Positively regulates osteoblast differentiation by acting as an upstream activator of the JNK pathway. Promotes JNK signaling in hepatocytes and positively regulates hepatocyte lipid storage by inhibiting beta-oxidation and triacylglycerol secretion while enhancing lipid synthesis. Restricts age-associated inflammation by negatively regulating differentiation of macrophages and their production of pro-inflammatory cytokines. Plays a role in negatively regulating the abundance of regulatory T cells in white adipose tissue. The polypeptide is Serine/threonine-protein kinase TAO3 (Taok3) (Mus musculus (Mouse)).